Here is a 66-residue protein sequence, read N- to C-terminus: Neurotoxin-like protein STR1 (66 aa).

Positions 2 to 65 constitute an LCN-type CS-alpha/beta domain; it reads RDGYIVHDGT…VWGEDGFMCW (64 aa). 4 disulfides stabilise this stretch: Cys-13-Cys-64, Cys-17-Cys-40, Cys-26-Cys-45, and Cys-30-Cys-47.

It belongs to the long (4 C-C) scorpion toxin superfamily. Sodium channel inhibitor family. Beta subfamily. As to expression, expressed by the venom gland.

Its subcellular location is the secreted. In terms of biological role, this protein is not toxic. The protein is Neurotoxin-like protein STR1 of Androctonus australis (Sahara scorpion).